A 341-amino-acid polypeptide reads, in one-letter code: Phosphate acyltransferase (341 aa).

It belongs to the PlsX family. In terms of assembly, homodimer. Probably interacts with PlsY.

The protein localises to the cytoplasm. It carries out the reaction a fatty acyl-[ACP] + phosphate = an acyl phosphate + holo-[ACP]. Its pathway is lipid metabolism; phospholipid metabolism. Its function is as follows. Catalyzes the reversible formation of acyl-phosphate (acyl-PO(4)) from acyl-[acyl-carrier-protein] (acyl-ACP). This enzyme utilizes acyl-ACP as fatty acyl donor, but not acyl-CoA. The polypeptide is Phosphate acyltransferase (Aliivibrio salmonicida (strain LFI1238) (Vibrio salmonicida (strain LFI1238))).